Here is a 306-residue protein sequence, read N- to C-terminus: Ornithine carbamoyltransferase (306 aa).

Residues 51–54 (STRT), glutamine 78, arginine 102, and 129–132 (HPCQ) contribute to the carbamoyl phosphate site. L-ornithine is bound by residues asparagine 160, aspartate 223, and 227 to 228 (SM). Residues 263–264 (CL) and arginine 291 each bind carbamoyl phosphate.

Belongs to the aspartate/ornithine carbamoyltransferase superfamily. OTCase family.

Its subcellular location is the cytoplasm. It catalyses the reaction carbamoyl phosphate + L-ornithine = L-citrulline + phosphate + H(+). It functions in the pathway amino-acid biosynthesis; L-arginine biosynthesis; L-arginine from L-ornithine and carbamoyl phosphate: step 1/3. Reversibly catalyzes the transfer of the carbamoyl group from carbamoyl phosphate (CP) to the N(epsilon) atom of ornithine (ORN) to produce L-citrulline. The sequence is that of Ornithine carbamoyltransferase from Trichormus variabilis (strain ATCC 29413 / PCC 7937) (Anabaena variabilis).